The sequence spans 304 residues: UDP-N-acetylenolpyruvoylglucosamine reductase (304 aa).

In terms of domain architecture, FAD-binding PCMH-type spans I34–G198. Residue R177 is part of the active site. S227 serves as the catalytic Proton donor. E297 is an active-site residue.

The protein belongs to the MurB family. FAD is required as a cofactor.

The protein resides in the cytoplasm. It carries out the reaction UDP-N-acetyl-alpha-D-muramate + NADP(+) = UDP-N-acetyl-3-O-(1-carboxyvinyl)-alpha-D-glucosamine + NADPH + H(+). It participates in cell wall biogenesis; peptidoglycan biosynthesis. Functionally, cell wall formation. The protein is UDP-N-acetylenolpyruvoylglucosamine reductase of Geobacillus thermodenitrificans (strain NG80-2).